Reading from the N-terminus, the 105-residue chain is UPF0145 protein Sala_0338 (105 aa).

This sequence belongs to the UPF0145 family.

This chain is UPF0145 protein Sala_0338, found in Sphingopyxis alaskensis (strain DSM 13593 / LMG 18877 / RB2256) (Sphingomonas alaskensis).